A 359-amino-acid polypeptide reads, in one-letter code: S-adenosylmethionine:tRNA ribosyltransferase-isomerase (359 aa).

It belongs to the QueA family. Monomer.

The protein resides in the cytoplasm. It catalyses the reaction 7-aminomethyl-7-carbaguanosine(34) in tRNA + S-adenosyl-L-methionine = epoxyqueuosine(34) in tRNA + adenine + L-methionine + 2 H(+). It participates in tRNA modification; tRNA-queuosine biosynthesis. Transfers and isomerizes the ribose moiety from AdoMet to the 7-aminomethyl group of 7-deazaguanine (preQ1-tRNA) to give epoxyqueuosine (oQ-tRNA). The polypeptide is S-adenosylmethionine:tRNA ribosyltransferase-isomerase (Synechococcus elongatus (strain ATCC 33912 / PCC 7942 / FACHB-805) (Anacystis nidulans R2)).